A 306-amino-acid polypeptide reads, in one-letter code: tRNA-cytidine(32) 2-sulfurtransferase (306 aa).

The PP-loop motif motif lies at 44–49 (SGGKDS). Cys119, Cys122, and Cys210 together coordinate [4Fe-4S] cluster.

Belongs to the TtcA family. In terms of assembly, homodimer. Mg(2+) is required as a cofactor. Requires [4Fe-4S] cluster as cofactor.

Its subcellular location is the cytoplasm. It carries out the reaction cytidine(32) in tRNA + S-sulfanyl-L-cysteinyl-[cysteine desulfurase] + AH2 + ATP = 2-thiocytidine(32) in tRNA + L-cysteinyl-[cysteine desulfurase] + A + AMP + diphosphate + H(+). Its pathway is tRNA modification. In terms of biological role, catalyzes the ATP-dependent 2-thiolation of cytidine in position 32 of tRNA, to form 2-thiocytidine (s(2)C32). The sulfur atoms are provided by the cysteine/cysteine desulfurase (IscS) system. The chain is tRNA-cytidine(32) 2-sulfurtransferase from Photorhabdus laumondii subsp. laumondii (strain DSM 15139 / CIP 105565 / TT01) (Photorhabdus luminescens subsp. laumondii).